The primary structure comprises 217 residues: CLA biosynthesis enone reductase (217 aa).

The FMN site is built by Arg-20, Ser-22, and Arg-24. Cys-51 is a 10-oxooctadecanoate binding site. Asn-78 and Gln-81 together coordinate FMN. Arg-118 lines the 10-oxooctadecanoate pocket. FMN contacts are provided by Asn-165, Ser-168, Gly-169, and Arg-206.

It belongs to the nitroreductase family. Homodimer. It depends on FMN as a cofactor.

The catalysed reaction is 10-oxo-(11E)-octadecenoate + NADH + H(+) = 10-oxooctadecanoate + NAD(+). Its pathway is lipid metabolism; fatty acid metabolism. Is involved in a saturation metabolic pathway of polyunsaturated fatty acids, that detoxifies unsaturated fatty acids and generates hydroxy fatty acids, oxo fatty acids, conjugated fatty acids such as conjugated linoleic acids (CLAs), and partially saturated trans-fatty acids as intermediates. CLA-ER catalyzes the saturation of the carbon-carbon double bond in 10-oxo-(11E)-octadecenoate to produce 10-oxooctadecanoate, during linoleate metabolism. As part of the gut microbiome, this enzyme modifies host fatty acid composition and is expected to improve human health by altering lipid metabolism related to the onset of metabolic syndrome. In Lactiplantibacillus plantarum (Lactobacillus plantarum), this protein is CLA biosynthesis enone reductase.